A 156-amino-acid chain; its full sequence is MATKSDPNYKIIAENRRARFDYFIESDLEVGIVLTGSEVKSLRTGQSNIAESYASVENGELWLINAYIAAYKQAGVFGHEERRRRKLLVSRKELARLWQAIGREGMTLVPLVMYFNDRGKVKLKIGVAKGKKVADKRETAAKRDWNRQKQRLLKQG.

It belongs to the SmpB family.

It localises to the cytoplasm. Functionally, required for rescue of stalled ribosomes mediated by trans-translation. Binds to transfer-messenger RNA (tmRNA), required for stable association of tmRNA with ribosomes. tmRNA and SmpB together mimic tRNA shape, replacing the anticodon stem-loop with SmpB. tmRNA is encoded by the ssrA gene; the 2 termini fold to resemble tRNA(Ala) and it encodes a 'tag peptide', a short internal open reading frame. During trans-translation Ala-aminoacylated tmRNA acts like a tRNA, entering the A-site of stalled ribosomes, displacing the stalled mRNA. The ribosome then switches to translate the ORF on the tmRNA; the nascent peptide is terminated with the 'tag peptide' encoded by the tmRNA and targeted for degradation. The ribosome is freed to recommence translation, which seems to be the essential function of trans-translation. This Paracoccus denitrificans (strain Pd 1222) protein is SsrA-binding protein.